A 249-amino-acid chain; its full sequence is 4-hydroxy-tetrahydrodipicolinate reductase (249 aa).

Residues aspartate 32, 74–76 (GTT), and 99–102 (SANF) each bind NAD(+). The active-site Proton donor/acceptor is the histidine 134. Histidine 135 contacts (S)-2,3,4,5-tetrahydrodipicolinate. Lysine 138 functions as the Proton donor in the catalytic mechanism. (S)-2,3,4,5-tetrahydrodipicolinate is bound at residue 144–145 (GT).

This sequence belongs to the DapB family.

It is found in the cytoplasm. The enzyme catalyses (S)-2,3,4,5-tetrahydrodipicolinate + NAD(+) + H2O = (2S,4S)-4-hydroxy-2,3,4,5-tetrahydrodipicolinate + NADH + H(+). It carries out the reaction (S)-2,3,4,5-tetrahydrodipicolinate + NADP(+) + H2O = (2S,4S)-4-hydroxy-2,3,4,5-tetrahydrodipicolinate + NADPH + H(+). The protein operates within amino-acid biosynthesis; L-lysine biosynthesis via DAP pathway; (S)-tetrahydrodipicolinate from L-aspartate: step 4/4. Functionally, catalyzes the conversion of 4-hydroxy-tetrahydrodipicolinate (HTPA) to tetrahydrodipicolinate. The protein is 4-hydroxy-tetrahydrodipicolinate reductase of Chlorobaculum parvum (strain DSM 263 / NCIMB 8327) (Chlorobium vibrioforme subsp. thiosulfatophilum).